Reading from the N-terminus, the 351-residue chain is Uroporphyrinogen decarboxylase (351 aa).

Substrate is bound by residues 25–29 (RQAGR), Asp-74, Tyr-151, Ser-206, and His-325.

The protein belongs to the uroporphyrinogen decarboxylase family. Homodimer.

It localises to the cytoplasm. It carries out the reaction uroporphyrinogen III + 4 H(+) = coproporphyrinogen III + 4 CO2. Its pathway is porphyrin-containing compound metabolism; protoporphyrin-IX biosynthesis; coproporphyrinogen-III from 5-aminolevulinate: step 4/4. Catalyzes the decarboxylation of four acetate groups of uroporphyrinogen-III to yield coproporphyrinogen-III. This chain is Uroporphyrinogen decarboxylase, found in Chlorobium phaeobacteroides (strain BS1).